The chain runs to 348 residues: Interferon regulatory factor 2 (348 aa).

Positions 5-113 (RMRMRPWLEE…NAFRVYRMLP (109 aa)) form a DNA-binding region, IRF tryptophan pentad repeat. K75 and K78 each carry N6-acetyllysine. Residues 117–137 (RPSKKGKKTKSEKDDKFKQIK) form a disordered region. Basic and acidic residues predominate over residues 125 to 137 (TKSEKDDKFKQIK). Glycyl lysine isopeptide (Lys-Gly) (interchain with G-Cter in SUMO) cross-links involve residues K137, K164, and K291. A disordered region spans residues 311 to 348 (LPQVVSTASTSSSRPDRETRASVIKKTSDITQSRVKSC). Polar residues-rich tracts occupy residues 314–323 (VVSTASTSSS) and 339–348 (DITQSRVKSC).

It belongs to the IRF family. In terms of assembly, interacts with CREBBP in growing cells; the interaction acetylates IRF2 and regulates IRF2-dependent H4 promoter activity.

It localises to the nucleus. Specifically binds to the upstream regulatory region of type I IFN and IFN-inducible MHC class I genes (the interferon consensus sequence (ICS)) and represses those genes. Also acts as an activator for several genes including H4 and IL7. Constitutively binds to the ISRE promoter to activate IL7. Involved in cell cycle regulation through binding the site II (HiNF-M) promoter region of H4 and activating transcription during cell growth. Antagonizes IRF1 transcriptional activation. This is Interferon regulatory factor 2 (IRF2) from Gallus gallus (Chicken).